The primary structure comprises 126 residues: Glycine cleavage system H protein (126 aa).

A Lipoyl-binding domain is found at 21 to 103; it reads TVTIGISEHA…YEGGWIVKVK (83 aa). At K62 the chain carries N6-lipoyllysine.

This sequence belongs to the GcvH family. The glycine cleavage system is composed of four proteins: P, T, L and H. The cofactor is (R)-lipoate.

In terms of biological role, the glycine cleavage system catalyzes the degradation of glycine. The H protein shuttles the methylamine group of glycine from the P protein to the T protein. This is Glycine cleavage system H protein from Vibrio vulnificus (strain CMCP6).